Consider the following 785-residue polypeptide: Endonuclease MutS2 (785 aa).

Residue 333–340 participates in ATP binding; sequence GPNTGGKT. Residues 710–785 enclose the Smr domain; that stretch reads LDLRGQRYDE…GNGATIVQLK (76 aa).

This sequence belongs to the DNA mismatch repair MutS family. MutS2 subfamily. In terms of assembly, homodimer. Binds to stalled ribosomes, contacting rRNA.

Functionally, endonuclease that is involved in the suppression of homologous recombination and thus may have a key role in the control of bacterial genetic diversity. Acts as a ribosome collision sensor, splitting the ribosome into its 2 subunits. Detects stalled/collided 70S ribosomes which it binds and splits by an ATP-hydrolysis driven conformational change. Acts upstream of the ribosome quality control system (RQC), a ribosome-associated complex that mediates the extraction of incompletely synthesized nascent chains from stalled ribosomes and their subsequent degradation. Probably generates substrates for RQC. The protein is Endonuclease MutS2 of Lactobacillus acidophilus (strain ATCC 700396 / NCK56 / N2 / NCFM).